We begin with the raw amino-acid sequence, 86 residues long: uncharacterized protein (86 aa).

Residues 63 to 85 (VGGRSPSIQNSFFFFFFFFFFFF) form a helical membrane-spanning segment.

It is found in the membrane. This is an uncharacterized protein from Dictyostelium discoideum (Social amoeba).